A 445-amino-acid polypeptide reads, in one-letter code: Coronin-A (445 aa).

4 WD repeats span residues glycine 77–serine 117, glycine 127–threonine 167, glycine 170–glutamate 209, and aspartate 259–histidine 299. The stretch at lysine 410 to threonine 444 forms a coiled coil.

This sequence belongs to the WD repeat coronin family. In terms of assembly, binds to F-actin.

It localises to the cell surface. Required for normal motility. Participates in cytokinesis. The polypeptide is Coronin-A (corA) (Dictyostelium discoideum (Social amoeba)).